Consider the following 358-residue polypeptide: DNA polymerase IV (358 aa).

Residues isoleucine 6 to glycine 187 form the UmuC domain. 2 residues coordinate Mg(2+): aspartate 10 and aspartate 105. Glutamate 106 is an active-site residue.

It belongs to the DNA polymerase type-Y family. As to quaternary structure, monomer. Requires Mg(2+) as cofactor.

It is found in the cytoplasm. The enzyme catalyses DNA(n) + a 2'-deoxyribonucleoside 5'-triphosphate = DNA(n+1) + diphosphate. In terms of biological role, poorly processive, error-prone DNA polymerase involved in untargeted mutagenesis. Copies undamaged DNA at stalled replication forks, which arise in vivo from mismatched or misaligned primer ends. These misaligned primers can be extended by PolIV. Exhibits no 3'-5' exonuclease (proofreading) activity. May be involved in translesional synthesis, in conjunction with the beta clamp from PolIII. The chain is DNA polymerase IV from Staphylococcus haemolyticus (strain JCSC1435).